Here is a 379-residue protein sequence, read N- to C-terminus: Gonadotropin-releasing hormone II receptor (379 aa).

At 1-40 (MSAGNGTPWGSAAGEESWAASGVAVEGSELPTFSAAAKVR) the chain is on the extracellular side. Residues 41-60 (VGVTIVLFVSSAGGNLAVLW) traverse the membrane as a helical segment. The Cytoplasmic portion of the chain corresponds to 61–76 (SVTRPQPSQLRPSPVR). The helical transmembrane segment at 77 to 96 (TLFAHLAAADLLVTFVVMPL) threads the bilayer. Topologically, residues 97–114 (DATWNITVQWLAEDIACR) are extracellular. N-linked (GlcNAc...) asparagine glycosylation is present at Asn-101. Cys-113 and Cys-188 are oxidised to a cystine. Residues 115–136 (TLMFLKLMAMYSAAFLPVVIGL) traverse the membrane as a helical segment. Topologically, residues 137–160 (DRQAAVLNPLGSRSGVRKLLGAAW) are cytoplasmic. A helical transmembrane segment spans residues 161–178 (GLSFLLALPQLFLFHTVH). The Extracellular segment spans residues 179–204 (RAGPVPFTQCVTKGSFKARWQETTYN). The chain crosses the membrane as a helical span at residues 205–224 (LFTFRCLFLLPLTAMAICYS). The Cytoplasmic segment spans residues 225–278 (HIVLSVSSPQTRKGSHAPAGEFALCRSFDNCPRVRLWALRLALLILLTFILCWT). A helical membrane pass occupies residues 279 to 297 (PYYLLGLWYWFSPTMLTEV). The Extracellular segment spans residues 298–303 (PPSLSH). Residues 304 to 323 (ILFLFGLLNAPLDPLLYGAF) form a helical membrane-spanning segment. Topologically, residues 324–379 (TLGCQRGHQELSIDSSNEGSGRMLQQEIHALRQQEVQKTVTSRSAGETKDISITSI) are cytoplasmic.

Belongs to the G-protein coupled receptor 1 family. Phosphorylated on the C-terminal cytoplasmic tail.

It is found in the cell membrane. In terms of biological role, receptor for gonadotropin releasing hormone II (GnRH II). This receptor mediates its action by association with G proteins that activate a phosphatidylinositol-calcium second messenger system. The sequence is that of Gonadotropin-releasing hormone II receptor (GNRHR2) from Macaca mulatta (Rhesus macaque).